The sequence spans 314 residues: Acetyl-coenzyme A carboxylase carboxyl transferase subunit beta (314 aa).

In terms of domain architecture, CoA carboxyltransferase N-terminal spans 24–293; that stretch reads LWIKCPDTGQ…IDAAPEPSPA (270 aa). The tract at residues 283 to 314 is disordered; the sequence is EIDAAPEPSPAAEEPAEPMPAPEAAAPSAPPA. Composition is skewed to low complexity over residues 284–295 and 304–314; these read IDAAPEPSPAAE and PEAAAPSAPPA.

It belongs to the AccD/PCCB family. As to quaternary structure, acetyl-CoA carboxylase is a heterohexamer composed of biotin carboxyl carrier protein (AccB), biotin carboxylase (AccC) and two subunits each of ACCase subunit alpha (AccA) and ACCase subunit beta (AccD).

It is found in the cytoplasm. It carries out the reaction N(6)-carboxybiotinyl-L-lysyl-[protein] + acetyl-CoA = N(6)-biotinyl-L-lysyl-[protein] + malonyl-CoA. The protein operates within lipid metabolism; malonyl-CoA biosynthesis; malonyl-CoA from acetyl-CoA: step 1/1. Functionally, component of the acetyl coenzyme A carboxylase (ACC) complex. Biotin carboxylase (BC) catalyzes the carboxylation of biotin on its carrier protein (BCCP) and then the CO(2) group is transferred by the transcarboxylase to acetyl-CoA to form malonyl-CoA. The sequence is that of Acetyl-coenzyme A carboxylase carboxyl transferase subunit beta from Nitrobacter hamburgensis (strain DSM 10229 / NCIMB 13809 / X14).